The chain runs to 153 residues: Bkd operon transcriptional regulator (153 aa).

One can recognise an HTH asnC-type domain in the interval 4–65 (LDRIDLKILR…RLDEERLSGA (62 aa)). The segment at residues 23 to 42 (WRDLAQKVGLSLTPTLRRVR) is a DNA-binding region (H-T-H motif).

Functionally, positive regulator of the bkd operon for branched-chain keto acid dehydrogenase complex. The sequence is that of Bkd operon transcriptional regulator (bkdR) from Pseudomonas aeruginosa (strain ATCC 15692 / DSM 22644 / CIP 104116 / JCM 14847 / LMG 12228 / 1C / PRS 101 / PAO1).